A 173-amino-acid polypeptide reads, in one-letter code: Mediator of RNA polymerase II transcription subunit 10 (173 aa).

Positions 1 to 10 (MVQQQQQSQQ) are enriched in low complexity. The disordered stretch occupies residues 1 to 42 (MVQQQQQSQQRMMELHERNDREKLARKTEKEREEERRKQEDD). The span at 13–42 (MELHERNDREKLARKTEKEREEERRKQEDD) shows a compositional bias: basic and acidic residues.

Belongs to the Mediator complex subunit 10 family. In terms of assembly, component of the Mediator complex.

It localises to the nucleus. Its function is as follows. Component of the Mediator complex, a coactivator involved in the regulated transcription of nearly all RNA polymerase II-dependent genes. Mediator functions as a bridge to convey information from gene-specific regulatory proteins to the basal RNA polymerase II transcription machinery. Mediator is recruited to promoters by direct interactions with regulatory proteins and serves as a scaffold for the assembly of a functional preinitiation complex with RNA polymerase II and the general transcription factors. Required for germ cell development and for transcriptional activation of certain stage-specific inducible promoters. This chain is Mediator of RNA polymerase II transcription subunit 10 (mdt-10), found in Caenorhabditis elegans.